The chain runs to 134 residues: Arginine decarboxylase proenzyme (134 aa).

The active-site Schiff-base intermediate with substrate; via pyruvic acid is serine 82. Residue serine 82 is modified to Pyruvic acid (Ser); by autocatalysis. Catalysis depends on histidine 87, which acts as the Proton acceptor; for processing activity. Cysteine 102 serves as the catalytic Proton donor; for catalytic activity.

It belongs to the prokaryotic AdoMetDC family. Type 1 subfamily. Heterooctamer of four alpha and four beta chains arranged as a tetramer of alpha/beta heterodimers. It depends on pyruvate as a cofactor. Is synthesized initially as an inactive proenzyme. Formation of the active enzyme involves a self-maturation process in which the active site pyruvoyl group is generated from an internal serine residue via an autocatalytic post-translational modification. Two non-identical subunits are generated from the proenzyme in this reaction, and the pyruvate is formed at the N-terminus of the alpha chain, which is derived from the carboxyl end of the proenzyme. The post-translation cleavage follows an unusual pathway, termed non-hydrolytic serinolysis, in which the side chain hydroxyl group of the serine supplies its oxygen atom to form the C-terminus of the beta chain, while the remainder of the serine residue undergoes an oxidative deamination to produce ammonia and the pyruvoyl group blocking the N-terminus of the alpha chain.

The enzyme catalyses L-arginine + H(+) = agmatine + CO2. Its pathway is amine and polyamine biosynthesis; agmatine biosynthesis; agmatine from L-arginine: step 1/1. Highly competitively inhibited by L-argininamide and L-arginine methyl ester. Also inhibited by alpha-difluoromethylarginine. Is not stimulated by potassium chloride as observed for other decarboxylases. Its function is as follows. Specifically catalyzes the decarboxylation of L-arginine to agmatine. Is also able to decarboxylate L-canavanine, although less efficiently. Has no S-adenosylmethionine decarboxylase (AdoMetDC) activity. The protein is Arginine decarboxylase proenzyme of Saccharolobus solfataricus (strain ATCC 35092 / DSM 1617 / JCM 11322 / P2) (Sulfolobus solfataricus).